A 174-amino-acid polypeptide reads, in one-letter code: Crossover junction endodeoxyribonuclease RuvC (174 aa).

Active-site residues include aspartate 8, glutamate 68, and aspartate 140. The Mg(2+) site is built by aspartate 8, glutamate 68, and aspartate 140.

The protein belongs to the RuvC family. Homodimer which binds Holliday junction (HJ) DNA. The HJ becomes 2-fold symmetrical on binding to RuvC with unstacked arms; it has a different conformation from HJ DNA in complex with RuvA. In the full resolvosome a probable DNA-RuvA(4)-RuvB(12)-RuvC(2) complex forms which resolves the HJ. Mg(2+) is required as a cofactor.

It is found in the cytoplasm. The enzyme catalyses Endonucleolytic cleavage at a junction such as a reciprocal single-stranded crossover between two homologous DNA duplexes (Holliday junction).. The RuvA-RuvB-RuvC complex processes Holliday junction (HJ) DNA during genetic recombination and DNA repair. Endonuclease that resolves HJ intermediates. Cleaves cruciform DNA by making single-stranded nicks across the HJ at symmetrical positions within the homologous arms, yielding a 5'-phosphate and a 3'-hydroxyl group; requires a central core of homology in the junction. The consensus cleavage sequence is 5'-(A/T)TT(C/G)-3'. Cleavage occurs on the 3'-side of the TT dinucleotide at the point of strand exchange. HJ branch migration catalyzed by RuvA-RuvB allows RuvC to scan DNA until it finds its consensus sequence, where it cleaves and resolves the cruciform DNA. In Legionella pneumophila (strain Lens), this protein is Crossover junction endodeoxyribonuclease RuvC.